The chain runs to 432 residues: Tol-Pal system protein TolB (432 aa).

An N-terminal signal peptide occupies residues 1 to 21 (MKKVIYTIVGFVFMWSTSVYA).

It belongs to the TolB family. The Tol-Pal system is composed of five core proteins: the inner membrane proteins TolA, TolQ and TolR, the periplasmic protein TolB and the outer membrane protein Pal. They form a network linking the inner and outer membranes and the peptidoglycan layer.

It localises to the periplasm. In terms of biological role, part of the Tol-Pal system, which plays a role in outer membrane invagination during cell division and is important for maintaining outer membrane integrity. The chain is Tol-Pal system protein TolB from Hydrogenovibrio crunogenus (strain DSM 25203 / XCL-2) (Thiomicrospira crunogena).